We begin with the raw amino-acid sequence, 157 residues long: UPF0225 protein PA1039 (157 aa).

The protein belongs to the UPF0225 family.

In Pseudomonas aeruginosa (strain ATCC 15692 / DSM 22644 / CIP 104116 / JCM 14847 / LMG 12228 / 1C / PRS 101 / PAO1), this protein is UPF0225 protein PA1039.